We begin with the raw amino-acid sequence, 617 residues long: Proline--tRNA ligase (617 aa).

The protein belongs to the class-II aminoacyl-tRNA synthetase family. ProS type 1 subfamily. In terms of assembly, homodimer.

It is found in the cytoplasm. The enzyme catalyses tRNA(Pro) + L-proline + ATP = L-prolyl-tRNA(Pro) + AMP + diphosphate. Catalyzes the attachment of proline to tRNA(Pro) in a two-step reaction: proline is first activated by ATP to form Pro-AMP and then transferred to the acceptor end of tRNA(Pro). As ProRS can inadvertently accommodate and process non-cognate amino acids such as alanine and cysteine, to avoid such errors it has two additional distinct editing activities against alanine. One activity is designated as 'pretransfer' editing and involves the tRNA(Pro)-independent hydrolysis of activated Ala-AMP. The other activity is designated 'posttransfer' editing and involves deacylation of mischarged Ala-tRNA(Pro). The misacylated Cys-tRNA(Pro) is not edited by ProRS. This is Proline--tRNA ligase from Streptococcus pneumoniae (strain Hungary19A-6).